The sequence spans 328 residues: Pantothenate kinase (328 aa).

Positions 1 to 12 are enriched in polar residues; the sequence is MAAPLNAQTRAP. The interval 1-22 is disordered; sequence MAAPLNAQTRAPQATGRAPDFS. ATP is bound at residue 113–120; sequence GSVAVGKS.

The protein belongs to the prokaryotic pantothenate kinase family.

Its subcellular location is the cytoplasm. It carries out the reaction (R)-pantothenate + ATP = (R)-4'-phosphopantothenate + ADP + H(+). It participates in cofactor biosynthesis; coenzyme A biosynthesis; CoA from (R)-pantothenate: step 1/5. This Corynebacterium efficiens (strain DSM 44549 / YS-314 / AJ 12310 / JCM 11189 / NBRC 100395) protein is Pantothenate kinase.